A 213-amino-acid chain; its full sequence is Phosphate-specific transport system accessory protein PhoU homolog 2 (213 aa).

The protein belongs to the PhoU family. In terms of assembly, homodimer.

It localises to the cytoplasm. In terms of biological role, plays a role in the regulation of phosphate uptake. In this role, it may bind, possibly as a chaperone, to PhoR, PhoP or a PhoR-PhoP complex to promote dephosphorylation of phospho-PhoP, or inhibit formation of the PhoR-PhoP transitory complex. This chain is Phosphate-specific transport system accessory protein PhoU homolog 2 (phoU2), found in Mycobacterium bovis (strain ATCC BAA-935 / AF2122/97).